Consider the following 151-residue polypeptide: Ribosome maturation factor RimP (151 aa).

Belongs to the RimP family.

It is found in the cytoplasm. Required for maturation of 30S ribosomal subunits. This Shewanella sp. (strain MR-4) protein is Ribosome maturation factor RimP.